A 1110-amino-acid polypeptide reads, in one-letter code: Sex-determining transformer protein 1 (1110 aa).

2 disordered regions span residues 1–103 (MMAP…AQQS) and 170–202 (TINGKRVGRPPGTFKRPQNNAANSSNSGNDSDM). Over residues 44–61 (GSEDKQPGGGDVKTENDP) the composition is skewed to basic and acidic residues. Positions 65–90 (GLGSATSNFIQSSVPPSHQTLSNPLQ) are enriched in polar residues. Over residues 188–201 (NNAANSSNSGNDSD) the composition is skewed to low complexity. The C2H2-type 1; low DNA-binding affinity zinc finger occupies 208–233 (LTCRWKSCNSSFQTLKALVDHVQESH). The C2H2-type 2; low DNA-binding affinity zinc finger occupies 244–270 (WRCEWEGCDRNETFKALYMLIVHVRRH). 3 consecutive C2H2-type zinc fingers follow at residues 276–300 (NKCEYPGCGKEYSRLENLKTHRRTH), 306–331 (YKCEFADCEKAFSNASDRAKHQNRTH), and 337–362 (YSCQIPQCTKSYTDPSSLRKHIKAVH). Disordered stretches follow at residues 363–397 (GDDEYEKAKKSRPANYSNRRRPDHRLAPPTGAMSH), 594–682 (EVEP…GSGE), 875–895 (RNVGGFGDEEDRNNRGHDQDR), and 1057–1110 (QEQP…RHQF). Low complexity predominate over residues 597-606 (PLQQQQQQEP). Over residues 641-652 (GNNGDGGFGGSG) the composition is skewed to gly residues. Residues 669-678 (PISQNGSRAS) are compositionally biased toward polar residues. Basic and acidic residues predominate over residues 886 to 895 (RNNRGHDQDR). The segment covering 1057–1066 (QEQPTSSFSS) has biased composition (polar residues). The segment covering 1076–1086 (ALPPPPPPPAP) has biased composition (pro residues). Residues 1092 to 1103 (SADNKDDSENIP) show a composition bias toward basic and acidic residues.

It belongs to the GLI C2H2-type zinc-finger protein family. As to quaternary structure, interacts with the MX regulatory domain of tra-2. As to expression, expressed in intestine and gonads (at protein level).

It is found in the cytoplasm. It localises to the nucleus. Plays a major role in controlling sexual phenotype. Terminal global regulator in a well-characterized cascade of sex-determining genes. Promotes female development. Interacts with tra-2 to promote spermatogenesis. Promotes spermatogenesis through the Tip60 HAT complex and by regulating the expression of genes, such as fog-3, required for male development. Association with chromatin and at the fog-3 promoter requires wdr-5.1, and may also require wdr-5.2. With trr-1, activates the fog-3 gene to determine sperm/oocyte cell fate. In hermaphrodites, binds to an intronic regulatory site in the ceh-30 gene, preventing ceh-30 transcription and thereby preventing survival of the CEM (cephalic male) sensory neurons. Represses the expression of the transcription factor dmd-3 in hermaphrodites to govern the timing and extent of male tail tip morphogenesis. Plays a role in controlling the sex-specific differentiation of PHC sensory neurons and represses the development of male-specific morphological features. This is Sex-determining transformer protein 1 from Caenorhabditis elegans.